Here is a 157-residue protein sequence, read N- to C-terminus: Transcriptional repressor NrdR (157 aa).

A zinc finger lies at 3–34 (CPFCGHMESQVKDSRPSEDGAAIRRRRLCPEC). Positions 49–139 (LTIVKRSGRR…VYRDFRETSD (91 aa)) constitute an ATP-cone domain.

Belongs to the NrdR family. The cofactor is Zn(2+).

Negatively regulates transcription of bacterial ribonucleotide reductase nrd genes and operons by binding to NrdR-boxes. In Caulobacter sp. (strain K31), this protein is Transcriptional repressor NrdR.